Reading from the N-terminus, the 610-residue chain is Replication factor C large subunit (610 aa).

55-62 (GPAGIGKT) is an ATP binding site. 3 stretches are compositionally biased toward basic and acidic residues: residues 467 to 478 (EKEGNASAEKPE), 502 to 515 (LPEKKRSSEMKLPE), and 594 to 603 (DGSKKAEPKN). The segment at 467 to 610 (EKEGNASAEK…PKNQKTLFDF (144 aa)) is disordered.

This sequence belongs to the activator 1 small subunits family. RfcL subfamily. As to quaternary structure, heteromultimer composed of small subunits (RfcS) and large subunits (RfcL).

Its function is as follows. Part of the RFC clamp loader complex which loads the PCNA sliding clamp onto DNA. In Methanosarcina mazei (strain ATCC BAA-159 / DSM 3647 / Goe1 / Go1 / JCM 11833 / OCM 88) (Methanosarcina frisia), this protein is Replication factor C large subunit.